Here is a 362-residue protein sequence, read N- to C-terminus: Erythritol/L-threitol dehydrogenase (362 aa).

Residues Cys-45, His-76, Glu-77, Cys-109, Cys-112, Cys-115, and Cys-123 each contribute to the Zn(2+) site. NAD(+) is bound by residues Ile-195 and Asp-215.

It belongs to the zinc-containing alcohol dehydrogenase family. Requires Zn(2+) as cofactor.

The enzyme catalyses erythritol + NAD(+) = D-erythrulose + NADH + H(+). It carries out the reaction L-threitol + NAD(+) = L-erythrulose + NADH + H(+). Its pathway is carbohydrate metabolism; erythritol degradation. The protein operates within carbohydrate metabolism; L-threitol degradation. Its function is as follows. Catalyzes the NAD-dependent reversible oxidation of erythritol and L-threitol. Involved in the degradation pathways of erythritol and L-threitol, that allow M.smegmatis to grow on these compounds as the sole carbon source. The sequence is that of Erythritol/L-threitol dehydrogenase from Mycolicibacterium smegmatis (strain ATCC 700084 / mc(2)155) (Mycobacterium smegmatis).